The primary structure comprises 111 residues: Protein RnfH (111 aa).

Residues 88-111 (RRRRVQKTRESGTREGQKWLRGGA) are disordered. Residues 94–105 (KTRESGTREGQK) are compositionally biased toward basic and acidic residues.

This sequence belongs to the UPF0125 (RnfH) family.

In Cupriavidus pinatubonensis (strain JMP 134 / LMG 1197) (Cupriavidus necator (strain JMP 134)), this protein is Protein RnfH.